The sequence spans 224 residues: Ribonuclease T (224 aa).

Over residues 1–11 the composition is skewed to acidic residues; that stretch reads MSEDLYEDDLD. Positions 1 to 22 are disordered; the sequence is MSEDLYEDDLDTQGSSGPRHPM. Positions 32-206 constitute an Exonuclease domain; it reads VVVDVETGGF…YDTEKTAELF (175 aa). The Mg(2+) site is built by D35, E37, H193, and D198. Residue H193 is the Proton donor/acceptor of the active site.

The protein belongs to the RNase T family. Homodimer. Mg(2+) serves as cofactor.

Trims short 3' overhangs of a variety of RNA species, leaving a one or two nucleotide 3' overhang. Responsible for the end-turnover of tRNA: specifically removes the terminal AMP residue from uncharged tRNA (tRNA-C-C-A). Also appears to be involved in tRNA biosynthesis. The protein is Ribonuclease T of Pseudomonas putida (strain ATCC 700007 / DSM 6899 / JCM 31910 / BCRC 17059 / LMG 24140 / F1).